Here is a 706-residue protein sequence, read N- to C-terminus: Choline transporter-like protein 2 (706 aa).

Topologically, residues Met-1–Asp-32 are cytoplasmic. The chain crosses the membrane as a helical span at residues Ile-33–Ala-53. Over Trp-54 to Trp-232 the chain is Extracellular. 2 N-linked (GlcNAc...) asparagine glycosylation sites follow: Asn-187 and Asn-210. The chain crosses the membrane as a helical span at residues Tyr-233–Leu-253. Residues Arg-254–Leu-256 are Cytoplasmic-facing. The helical transmembrane segment at Ala-257–Phe-277 threads the bilayer. The Extracellular portion of the chain corresponds to His-278 to Trp-315. The N-linked (GlcNAc...) asparagine glycan is linked to Asn-293. Residues Leu-316 to Leu-336 traverse the membrane as a helical segment. Residues Arg-337–Pro-364 lie on the Cytoplasmic side of the membrane. Residues Leu-365–Leu-385 form a helical membrane-spanning segment. Topologically, residues Ser-386–Phe-454 are extracellular. Asn-397 and Asn-412 each carry an N-linked (GlcNAc...) asparagine glycan. Residues Trp-455–Trp-477 form a helical membrane-spanning segment. Residues Ala-478 to Ser-504 lie on the Cytoplasmic side of the membrane. A helical membrane pass occupies residues Leu-505–Ile-525. Over Asp-526–Asp-599 the chain is Extracellular. A helical transmembrane segment spans residues Phe-600–Phe-620. Residues Phe-621–Tyr-638 lie on the Cytoplasmic side of the membrane. The chain crosses the membrane as a helical span at residues Trp-639 to Val-659. Residues Tyr-660–Glu-706 lie on the Extracellular side of the membrane.

The protein belongs to the CTL (choline transporter-like) family.

It localises to the cell membrane. The protein resides in the mitochondrion outer membrane. It catalyses the reaction choline(out) + n H(+)(in) = choline(in) + n H(+)(out). It carries out the reaction ethanolamine(out) + n H(+)(in) = ethanolamine(in) + n H(+)(out). Its function is as follows. Choline/H+ antiporter, mainly in mitochodria. Also acts as a low-affinity ethanolamine/H+ antiporter, regulating the supply of extracellular ethanolamine (Etn) for the CDP-Etn pathway, redistribute intracellular Etn and balance the CDP-Cho and CDP-Etn arms of the Kennedy pathway. The protein is Choline transporter-like protein 2 (slc44a2) of Salmo salar (Atlantic salmon).